We begin with the raw amino-acid sequence, 578 residues long: Sulfite reductase [NADPH] hemoprotein beta-component (578 aa).

A compositionally biased stretch (polar residues) spans 1-11 (MSANQQSNSQE). The segment at 1–20 (MSANQQSNSQEVLGEVLGPL) is disordered. Residues C441, C447, C487, and C491 each coordinate [4Fe-4S] cluster. C491 provides a ligand contact to siroheme.

The protein belongs to the nitrite and sulfite reductase 4Fe-4S domain family. In terms of assembly, alpha(8)-beta(8). The alpha component is a flavoprotein, the beta component is a hemoprotein. Requires siroheme as cofactor. It depends on [4Fe-4S] cluster as a cofactor.

The enzyme catalyses hydrogen sulfide + 3 NADP(+) + 3 H2O = sulfite + 3 NADPH + 4 H(+). Its pathway is sulfur metabolism; hydrogen sulfide biosynthesis; hydrogen sulfide from sulfite (NADPH route): step 1/1. Functionally, component of the sulfite reductase complex that catalyzes the 6-electron reduction of sulfite to sulfide. This is one of several activities required for the biosynthesis of L-cysteine from sulfate. The polypeptide is Sulfite reductase [NADPH] hemoprotein beta-component (Vibrio campbellii (strain ATCC BAA-1116)).